Here is a 1162-residue protein sequence, read N- to C-terminus: ATP-dependent helicase/deoxyribonuclease subunit B (1162 aa).

One can recognise a UvrD-like helicase ATP-binding domain in the interval 1 to 275 (MELNAYIGRA…QFFKQQYRFN (275 aa)). 8–15 (GRAGTGKS) contacts ATP. Positions 269–583 (KQQYRFNNKD…SIGTMDLAKV (315 aa)) constitute a UvrD-like helicase C-terminal domain. Positions 784, 1117, 1120, and 1126 each coordinate [4Fe-4S] cluster.

It belongs to the helicase family. AddB/RexB type 1 subfamily. As to quaternary structure, heterodimer of AddA and AddB. It depends on Mg(2+) as a cofactor. [4Fe-4S] cluster serves as cofactor.

Functionally, the heterodimer acts as both an ATP-dependent DNA helicase and an ATP-dependent, dual-direction single-stranded exonuclease. Recognizes the chi site generating a DNA molecule suitable for the initiation of homologous recombination. The AddB subunit has 5' -&gt; 3' nuclease activity but not helicase activity. This chain is ATP-dependent helicase/deoxyribonuclease subunit B, found in Staphylococcus haemolyticus (strain JCSC1435).